The primary structure comprises 236 residues: 4-aminobenzoate synthase (236 aa).

Fe(2+)-binding residues include E87, H94, E148, H180, D184, and H187.

It belongs to the CADD family. As to quaternary structure, homodimer. Requires Fe(2+) as cofactor. Mn(2+) serves as cofactor.

Functionally, involved in de novo para-aminobenzoate (PABA) biosynthesis. Acts as a self-sacrificing or 'suicide' enzyme that utilizes its own active site tyrosine residue(s) as the substrate for PABA synthesis. The side chain of the tyrosine residue is released from the protein backbone via cleavage of the C(alpha)-C(beta) bond, leaving a glycine in place of the original tyrosine residue. Reaction requires O(2) and a reduced dimetal cofactor. This Chlamydia muridarum (strain MoPn / Nigg) protein is 4-aminobenzoate synthase.